A 400-amino-acid chain; its full sequence is Acetate kinase (400 aa).

N9 contributes to the Mg(2+) binding site. K16 lines the ATP pocket. R90 contributes to the substrate binding site. Catalysis depends on D147, which acts as the Proton donor/acceptor. Residues 207–211, 282–284, and 330–334 each bind ATP; these read HIGNG, DLR, and GIGEN. E385 contributes to the Mg(2+) binding site.

The protein belongs to the acetokinase family. In terms of assembly, homodimer. Requires Mg(2+) as cofactor. Mn(2+) serves as cofactor.

Its subcellular location is the cytoplasm. It catalyses the reaction acetate + ATP = acetyl phosphate + ADP. The protein operates within metabolic intermediate biosynthesis; acetyl-CoA biosynthesis; acetyl-CoA from acetate: step 1/2. In terms of biological role, catalyzes the formation of acetyl phosphate from acetate and ATP. Can also catalyze the reverse reaction. This chain is Acetate kinase, found in Staphylococcus aureus (strain JH1).